Reading from the N-terminus, the 241-residue chain is Probable transcriptional regulatory protein LHK_02347 (241 aa).

Belongs to the TACO1 family.

It is found in the cytoplasm. The protein is Probable transcriptional regulatory protein LHK_02347 of Laribacter hongkongensis (strain HLHK9).